The following is a 252-amino-acid chain: Neurexophilin-3 (252 aa).

Residues 1–22 (MQLTRCCFVFLVQGSLYLVICG) form the signal peptide. Residues 23-75 (QEDGPPGSEDPEHDDHEGQPRPRVPRKRGHISPKSRPLANSTLLGLLAPPGEV) form an II region. The segment at 27–59 (PPGSEDPEHDDHEGQPRPRVPRKRGHISPKSRP) is disordered. Residues 45–55 (RVPRKRGHISP) are compositionally biased toward basic residues. Residues N62, N127, N137, and N143 are each glycosylated (N-linked (GlcNAc...) asparagine). The III stretch occupies residues 76-157 (WGILGQPPNR…LVPPSKAVEF (82 aa)). The IV (linker domain) stretch occupies residues 158 to 166 (HQEQQIFIE). Positions 167 to 252 (AKASKIFNCR…HSDTPYYPSG (86 aa)) are v (Cys-rich).

Belongs to the neurexophilin family. Post-translationally, may be proteolytically processed at the boundary between the N-terminal non-conserved and the central conserved domain in neuron-like cells. Brain. Detected in several other tissues.

The protein resides in the secreted. In terms of biological role, may be signaling molecules that resemble neuropeptides. Ligand for alpha-neurexins. The chain is Neurexophilin-3 (Nxph3) from Rattus norvegicus (Rat).